Consider the following 357-residue polypeptide: MAQYRVVLLPGDGIGPEITAVARQLLDVVAQRHGFQLMFEEQPIGGSAIDATGEPLPASTLTACRSADAVLLAAIGSPRFDSLPREKRPETGLLGLRSGLELFANLRPVKIVPALIGASSLKQEVIEGVDLMVVRELTGGIYFGQPKGRIEADGDERGFNTMTYSASEVDRIAKVAFEIAGERNNRLCSVDKANVLDVSQLWRDRVDAMAPRYGEVDVSHMYVDNAAMQLVRDPRQFDVLLTGNLFGDILSDEAAMLTGSIGMLPSASLGSDGPGLFEPVHGSAPDIAGQDKANPMAMVLSAAMMLRIGLKQSSAADDLERAVDAVLASGFRTGDLMSEGCTPLGCQAMGEQLLKAL.

Positions 97, 107, 135, and 224 each coordinate substrate. Residues D224, D248, and D252 each contribute to the Mg(2+) site. 282–294 (GSAPDIAGQDKAN) provides a ligand contact to NAD(+).

The protein belongs to the isocitrate and isopropylmalate dehydrogenases family. LeuB type 1 subfamily. As to quaternary structure, homodimer. Requires Mg(2+) as cofactor. Mn(2+) serves as cofactor.

The protein resides in the cytoplasm. It catalyses the reaction (2R,3S)-3-isopropylmalate + NAD(+) = 4-methyl-2-oxopentanoate + CO2 + NADH. Its pathway is amino-acid biosynthesis; L-leucine biosynthesis; L-leucine from 3-methyl-2-oxobutanoate: step 3/4. Catalyzes the oxidation of 3-carboxy-2-hydroxy-4-methylpentanoate (3-isopropylmalate) to 3-carboxy-4-methyl-2-oxopentanoate. The product decarboxylates to 4-methyl-2 oxopentanoate. The protein is 3-isopropylmalate dehydrogenase of Synechococcus sp. (strain CC9902).